The sequence spans 293 residues: FAS1 domain-containing protein DEHA2G15708g (293 aa).

Positions 1–18 (MKLSSILYVSVLAHLVMS) are cleaved as a signal peptide. Over residues 76–87 (DHIGENEKREAK) the composition is skewed to basic and acidic residues. The interval 76 to 126 (DHIGENEKREAKNVYNLQSLKEGLDDENDKREGNVNKPEVSEEGSNKGDKR) is disordered. Residues 141–290 (QNLLQSILPQ…GYIFVINDVL (150 aa)) form the FAS1 domain.

It is found in the vacuole. The protein is FAS1 domain-containing protein DEHA2G15708g of Debaryomyces hansenii (strain ATCC 36239 / CBS 767 / BCRC 21394 / JCM 1990 / NBRC 0083 / IGC 2968) (Yeast).